Here is a 192-residue protein sequence, read N- to C-terminus: Probable cobalt-precorrin-6B C(15)-methyltransferase (decarboxylating) (192 aa).

S-adenosyl-L-methionine is bound by residues T20, 44–48, E68, and A96; that span reads GSGTG.

Belongs to the methyltransferase superfamily. Archaeal-type CbiT family.

It carries out the reaction Co-precorrin-6B + S-adenosyl-L-methionine = Co-precorrin-7 + S-adenosyl-L-homocysteine + CO2. It participates in cofactor biosynthesis; adenosylcobalamin biosynthesis; cob(II)yrinate a,c-diamide from sirohydrochlorin (anaerobic route): step 8/10. Functionally, catalyzes the methylation of C-15 in cobalt-precorrin-6B followed by the decarboxylation of C-12 to form cobalt-precorrin-7. This is Probable cobalt-precorrin-6B C(15)-methyltransferase (decarboxylating) from Sulfurisphaera tokodaii (strain DSM 16993 / JCM 10545 / NBRC 100140 / 7) (Sulfolobus tokodaii).